We begin with the raw amino-acid sequence, 277 residues long: 3-methyl-2-oxobutanoate hydroxymethyltransferase (277 aa).

Mg(2+) is bound by residues aspartate 53 and aspartate 96. 3-methyl-2-oxobutanoate contacts are provided by residues 53–54, aspartate 96, and lysine 126; that span reads DS. Glutamate 128 contributes to the Mg(2+) binding site. Residue glutamate 195 is the Proton acceptor of the active site.

The protein belongs to the PanB family. As to quaternary structure, homodecamer; pentamer of dimers. Mg(2+) serves as cofactor.

It is found in the cytoplasm. The catalysed reaction is 3-methyl-2-oxobutanoate + (6R)-5,10-methylene-5,6,7,8-tetrahydrofolate + H2O = 2-dehydropantoate + (6S)-5,6,7,8-tetrahydrofolate. It participates in cofactor biosynthesis; (R)-pantothenate biosynthesis; (R)-pantoate from 3-methyl-2-oxobutanoate: step 1/2. Its function is as follows. Catalyzes the reversible reaction in which hydroxymethyl group from 5,10-methylenetetrahydrofolate is transferred onto alpha-ketoisovalerate to form ketopantoate. This chain is 3-methyl-2-oxobutanoate hydroxymethyltransferase, found in Pelodictyon phaeoclathratiforme (strain DSM 5477 / BU-1).